Consider the following 98-residue polypeptide: Small ribosomal subunit protein uS19c (98 aa).

It belongs to the universal ribosomal protein uS19 family.

It localises to the plastid. The protein localises to the chloroplast. Its function is as follows. Protein S19 forms a complex with S13 that binds strongly to the 16S ribosomal RNA. This is Small ribosomal subunit protein uS19c from Jasminum nudiflorum (Winter jasmine).